Consider the following 314-residue polypeptide: Methionyl-tRNA formyltransferase (314 aa).

Residue 110–113 (SLLP) participates in (6S)-5,6,7,8-tetrahydrofolate binding.

The protein belongs to the Fmt family.

The enzyme catalyses L-methionyl-tRNA(fMet) + (6R)-10-formyltetrahydrofolate = N-formyl-L-methionyl-tRNA(fMet) + (6S)-5,6,7,8-tetrahydrofolate + H(+). In terms of biological role, attaches a formyl group to the free amino group of methionyl-tRNA(fMet). The formyl group appears to play a dual role in the initiator identity of N-formylmethionyl-tRNA by promoting its recognition by IF2 and preventing the misappropriation of this tRNA by the elongation apparatus. In Bacillus cereus (strain AH187), this protein is Methionyl-tRNA formyltransferase.